A 158-amino-acid polypeptide reads, in one-letter code: NAD(P)H-quinone oxidoreductase subunit J, chloroplastic (158 aa).

This sequence belongs to the complex I 30 kDa subunit family. NDH is composed of at least 16 different subunits, 5 of which are encoded in the nucleus.

Its subcellular location is the plastid. It is found in the chloroplast thylakoid membrane. The catalysed reaction is a plastoquinone + NADH + (n+1) H(+)(in) = a plastoquinol + NAD(+) + n H(+)(out). It carries out the reaction a plastoquinone + NADPH + (n+1) H(+)(in) = a plastoquinol + NADP(+) + n H(+)(out). In terms of biological role, NDH shuttles electrons from NAD(P)H:plastoquinone, via FMN and iron-sulfur (Fe-S) centers, to quinones in the photosynthetic chain and possibly in a chloroplast respiratory chain. The immediate electron acceptor for the enzyme in this species is believed to be plastoquinone. Couples the redox reaction to proton translocation, and thus conserves the redox energy in a proton gradient. The sequence is that of NAD(P)H-quinone oxidoreductase subunit J, chloroplastic from Solanum tuberosum (Potato).